A 114-amino-acid polypeptide reads, in one-letter code: Large ribosomal subunit protein bL20 (114 aa).

The protein belongs to the bacterial ribosomal protein bL20 family.

Binds directly to 23S ribosomal RNA and is necessary for the in vitro assembly process of the 50S ribosomal subunit. It is not involved in the protein synthesizing functions of that subunit. This is Large ribosomal subunit protein bL20 from Amoebophilus asiaticus (strain 5a2).